The sequence spans 188 residues: Peptidyl-tRNA hydrolase (188 aa).

TRNA is bound at residue tyrosine 14. Histidine 19 (proton acceptor) is an active-site residue. TRNA contacts are provided by tyrosine 64, asparagine 66, and asparagine 112.

Belongs to the PTH family. Monomer.

Its subcellular location is the cytoplasm. The enzyme catalyses an N-acyl-L-alpha-aminoacyl-tRNA + H2O = an N-acyl-L-amino acid + a tRNA + H(+). Its function is as follows. Hydrolyzes ribosome-free peptidyl-tRNAs (with 1 or more amino acids incorporated), which drop off the ribosome during protein synthesis, or as a result of ribosome stalling. Catalyzes the release of premature peptidyl moieties from peptidyl-tRNA molecules trapped in stalled 50S ribosomal subunits, and thus maintains levels of free tRNAs and 50S ribosomes. In Clostridium novyi (strain NT), this protein is Peptidyl-tRNA hydrolase.